The chain runs to 1342 residues: DNA-directed RNA polymerase subunit beta (1342 aa).

The protein belongs to the RNA polymerase beta chain family. As to quaternary structure, the RNAP catalytic core consists of 2 alpha, 1 beta, 1 beta' and 1 omega subunit. When a sigma factor is associated with the core the holoenzyme is formed, which can initiate transcription.

The catalysed reaction is RNA(n) + a ribonucleoside 5'-triphosphate = RNA(n+1) + diphosphate. Its function is as follows. DNA-dependent RNA polymerase catalyzes the transcription of DNA into RNA using the four ribonucleoside triphosphates as substrates. This Mannheimia succiniciproducens (strain KCTC 0769BP / MBEL55E) protein is DNA-directed RNA polymerase subunit beta.